A 433-amino-acid chain; its full sequence is 26S proteasome regulatory subunit 7 (433 aa).

Residues 1–22 (MPDYLGADQRKTKEDEKDDKPI) are disordered. Positions 8–22 (DQRKTKEDEKDDKPI) are enriched in basic and acidic residues. Position 116 is an N6-acetyllysine (Lys-116). 216 to 223 (GPPGTGKT) provides a ligand contact to ATP. Lys-422 carries the N6-acetyllysine modification.

The protein belongs to the AAA ATPase family. In terms of assembly, component of the 19S proteasome regulatory particle complex. The 26S proteasome consists of a 20S core particle (CP) and two 19S regulatory subunits (RP). The regulatory particle is made of a lid composed of 9 subunits, a base containing 6 ATPases including PSMC2 and few additional components. Interacts with NDC80 and SQSTM1. Interacts with PAAF1. Interacts with TRIM5. In terms of processing, monoubiquitinated by RNF181. Phosphorylated. Dephosphorylated by UBLCP1 which impairs PSMC2 ATPase activity and disrupts 26S proteasome assembly.

The protein resides in the cytoplasm. Functionally, component of the 26S proteasome, a multiprotein complex involved in the ATP-dependent degradation of ubiquitinated proteins. This complex plays a key role in the maintenance of protein homeostasis by removing misfolded or damaged proteins, which could impair cellular functions, and by removing proteins whose functions are no longer required. Therefore, the proteasome participates in numerous cellular processes, including cell cycle progression, apoptosis, or DNA damage repair. PSMC2 belongs to the heterohexameric ring of AAA (ATPases associated with diverse cellular activities) proteins that unfolds ubiquitinated target proteins that are concurrently translocated into a proteolytic chamber and degraded into peptides. The polypeptide is 26S proteasome regulatory subunit 7 (Psmc2) (Rattus norvegicus (Rat)).